We begin with the raw amino-acid sequence, 445 residues long: MITGKITCLHITDVRFPTSLDQHGSDAMHTDPDYSAAYVVIETDAADGLKGHGLTFTLGKGTEVVVCAVRALSRHVIGKALEDIVNNFRDFYRQLTSDGQLRWIGPEKGAVQLATAAVLNAVWDLWAKKEKKPLWKLLVDMDPHQLVSCIDFRYITDALTEEEALKILQNGKQGQRDREEHMLTSGYPAYTTSCAWLGYSDEQLKKLCSDALKEGWTRFKVKVGADLKDDIRRCELIRDMIGPDNIMMLDANQRWDVQEAISWVKDLAKYKPLWIEEPTSPDDILGHATISKELSPVNIGVATGEQCHNRVMFKQFLQAKALQYLQIDSCRLGSVNENLSVLLMAKKFNVPVCPHAGGVGLCELVQHLILFDYICVSGSLDNRMCEYVDHLHEHFTYPVIINRAAYMPPKDPGYSTEMKEESVLQYQFPDGAVWKKLILEKKVEV.

Substrate contacts are provided by residues 24 to 26, Y34, and K220; that span reads GSD. The Proton donor/acceptor role is filled by K222. D250 serves as a coordination point for Mg(2+). Residues N252, E276, E305, 355–357, and E386 each bind substrate; that span reads HAG. Positions 276 and 305 each coordinate Mg(2+). Residue H355 is part of the active site.

This sequence belongs to the mandelate racemase/muconate lactonizing enzyme family. ENOSF1 subfamily. The cofactor is Mg(2+).

It localises to the mitochondrion. The catalysed reaction is L-fuconate = 2-dehydro-3-deoxy-L-fuconate + H2O. In terms of biological role, plays a role in the catabolism of L-fucose, a sugar that is part of the carbohydrates that are attached to cellular glycoproteins. Catalyzes the dehydration of L-fuconate to 2-keto-3-deoxy-L-fuconate by the abstraction of the 2-proton to generate an enediolate intermediate that is stabilized by the magnesium ion. May down-regulate thymidylate synthase activity, possibly already at the RNA level, by promoting the degradation of TYMS mRNA via an antisense RNA-based mechanism. The protein is Mitochondrial enolase superfamily member 1 (enosf1) of Xenopus laevis (African clawed frog).